A 113-amino-acid chain; its full sequence is U11-theraphotoxin-Hhn1a (113 aa).

The first 21 residues, Met-1–Ala-21, serve as a signal peptide directing secretion. A propeptide spanning residues Asp-22–Arg-74 is cleaved from the precursor. Cystine bridges form between Cys-75–Cys-90, Cys-82–Cys-95, and Cys-89–Cys-110.

The protein belongs to the neurotoxin 14 (magi-1) family. 01 (HNTX-16) subfamily. In terms of tissue distribution, expressed by the venom gland.

Its subcellular location is the secreted. Its function is as follows. Probable ion channel inhibitor. This Cyriopagopus hainanus (Chinese bird spider) protein is U11-theraphotoxin-Hhn1a.